A 230-amino-acid polypeptide reads, in one-letter code: Demethylmenaquinone methyltransferase (230 aa).

Residues Thr-62, Asp-80, 100-101 (DG), and Ser-117 each bind S-adenosyl-L-methionine.

The protein belongs to the class I-like SAM-binding methyltransferase superfamily. MenG/UbiE family.

It carries out the reaction a 2-demethylmenaquinol + S-adenosyl-L-methionine = a menaquinol + S-adenosyl-L-homocysteine + H(+). The protein operates within quinol/quinone metabolism; menaquinone biosynthesis; menaquinol from 1,4-dihydroxy-2-naphthoate: step 2/2. In terms of biological role, methyltransferase required for the conversion of demethylmenaquinol (DMKH2) to menaquinol (MKH2). The polypeptide is Demethylmenaquinone methyltransferase (Corynebacterium efficiens (strain DSM 44549 / YS-314 / AJ 12310 / JCM 11189 / NBRC 100395)).